Here is a 642-residue protein sequence, read N- to C-terminus: Threonine--tRNA ligase (642 aa).

The 61-residue stretch at 1–61 folds into the TGS domain; the sequence is MPVITLPDGS…ETDSDLSIIT (61 aa). A catalytic region spans residues 243-534; sequence DHRKIGKQLD…LIEEYAGKFP (292 aa). Residues C334, H385, and H511 each coordinate Zn(2+).

This sequence belongs to the class-II aminoacyl-tRNA synthetase family. As to quaternary structure, homodimer. Requires Zn(2+) as cofactor.

Its subcellular location is the cytoplasm. The enzyme catalyses tRNA(Thr) + L-threonine + ATP = L-threonyl-tRNA(Thr) + AMP + diphosphate + H(+). In terms of biological role, catalyzes the attachment of threonine to tRNA(Thr) in a two-step reaction: L-threonine is first activated by ATP to form Thr-AMP and then transferred to the acceptor end of tRNA(Thr). Also edits incorrectly charged L-seryl-tRNA(Thr). This Shewanella pealeana (strain ATCC 700345 / ANG-SQ1) protein is Threonine--tRNA ligase.